A 220-amino-acid polypeptide reads, in one-letter code: Ribose-5-phosphate isomerase A (220 aa).

Substrate contacts are provided by residues 28 to 31 (TGST), 81 to 84 (DGAD), and 94 to 97 (KGGG). Glu103 functions as the Proton acceptor in the catalytic mechanism. Lys121 is a substrate binding site.

The protein belongs to the ribose 5-phosphate isomerase family. Homodimer.

It carries out the reaction aldehydo-D-ribose 5-phosphate = D-ribulose 5-phosphate. Its pathway is carbohydrate degradation; pentose phosphate pathway; D-ribose 5-phosphate from D-ribulose 5-phosphate (non-oxidative stage): step 1/1. In terms of biological role, catalyzes the reversible conversion of ribose-5-phosphate to ribulose 5-phosphate. This is Ribose-5-phosphate isomerase A from Hydrogenovibrio crunogenus (strain DSM 25203 / XCL-2) (Thiomicrospira crunogena).